The following is a 374-amino-acid chain: Heat stress transcription factor A-8 (374 aa).

Residues valine 17–asparagine 112 mediate DNA binding. Residues threonine 126 to methionine 192 form a hydrophobic repeat HR-A/B region. Residues aspartate 285–leucine 294 carry the AHA1 motif. The short motif at arginine 298–lysine 303 is the Nuclear localization signal element. The AHA2 signature appears at lysine 330 to glutamate 339. The Nuclear export signal signature appears at leucine 363–leucine 370.

This sequence belongs to the HSF family. Class A subfamily. As to quaternary structure, homotrimer. Post-translationally, exhibits temperature-dependent phosphorylation.

It localises to the cytoplasm. The protein resides in the nucleus. Its function is as follows. Transcriptional activator that specifically binds DNA sequence 5'-AGAAnnTTCT-3' known as heat shock promoter elements (HSE). This chain is Heat stress transcription factor A-8 (HSFA8), found in Arabidopsis thaliana (Mouse-ear cress).